The chain runs to 1026 residues: HEAT repeat-containing protein 4 (1026 aa).

The tract at residues 135–175 (AVKTESSANPEKKLKKSKPASTVREAPRPLIHHPCMHPDML) is disordered. HEAT repeat units follow at residues 530–568 (LLPALEAALCDKNAHVRMAAAICQYAIQSHNPLARNIMQ), 724–760 (KLMTAKLLPSFLHCFSDDFTAVRRAACLAAGALQIRD), and 761–794 (KMVLECLLNLMQRDPYWKIKAFAIRALGQIGQVS).

The sequence is that of HEAT repeat-containing protein 4 (HEATR4) from Homo sapiens (Human).